A 290-amino-acid chain; its full sequence is Diaminopimelate epimerase (290 aa).

Residues Asn14 and Asn67 each coordinate substrate. Cys76 functions as the Proton donor in the catalytic mechanism. Substrate contacts are provided by residues 77–78 (GN), Asn166, Asn199, and 217–218 (ER). Cys226 functions as the Proton acceptor in the catalytic mechanism. 227 to 228 (GT) is a substrate binding site.

Belongs to the diaminopimelate epimerase family. Homodimer.

It localises to the cytoplasm. It catalyses the reaction (2S,6S)-2,6-diaminopimelate = meso-2,6-diaminopimelate. It participates in amino-acid biosynthesis; L-lysine biosynthesis via DAP pathway; DL-2,6-diaminopimelate from LL-2,6-diaminopimelate: step 1/1. In terms of biological role, catalyzes the stereoinversion of LL-2,6-diaminopimelate (L,L-DAP) to meso-diaminopimelate (meso-DAP), a precursor of L-lysine and an essential component of the bacterial peptidoglycan. The polypeptide is Diaminopimelate epimerase (Geobacillus thermodenitrificans (strain NG80-2)).